The chain runs to 387 residues: S-adenosylmethionine synthase (387 aa).

H15 lines the ATP pocket. D17 lines the Mg(2+) pocket. E43 is a K(+) binding site. Residues E56 and Q99 each contribute to the L-methionine site. Residues 99 to 109 (QSPDIAQGVNA) are flexible loop. ATP contacts are provided by residues 166 to 168 (DAK), 232 to 233 (RF), D241, 247 to 248 (RK), A264, and K268. D241 lines the L-methionine pocket. K272 lines the L-methionine pocket.

The protein belongs to the AdoMet synthase family. In terms of assembly, homotetramer; dimer of dimers. Mg(2+) is required as a cofactor. The cofactor is K(+).

It localises to the cytoplasm. It catalyses the reaction L-methionine + ATP + H2O = S-adenosyl-L-methionine + phosphate + diphosphate. The protein operates within amino-acid biosynthesis; S-adenosyl-L-methionine biosynthesis; S-adenosyl-L-methionine from L-methionine: step 1/1. Functionally, catalyzes the formation of S-adenosylmethionine (AdoMet) from methionine and ATP. The overall synthetic reaction is composed of two sequential steps, AdoMet formation and the subsequent tripolyphosphate hydrolysis which occurs prior to release of AdoMet from the enzyme. This Dechloromonas aromatica (strain RCB) protein is S-adenosylmethionine synthase.